The sequence spans 71 residues: Long neurotoxin 1 (71 aa).

5 disulfides stabilise this stretch: cysteine 3/cysteine 20, cysteine 14/cysteine 41, cysteine 26/cysteine 30, cysteine 45/cysteine 56, and cysteine 57/cysteine 62.

Belongs to the three-finger toxin family. Long-chain subfamily. Type II alpha-neurotoxin sub-subfamily. Expressed by the venom gland.

It is found in the secreted. Binds with high affinity to muscular (alpha-1/CHRNA1) and neuronal (alpha-7/CHRNA7) nicotinic acetylcholine receptor (nAChR) and inhibits acetylcholine from binding to the receptor, thereby impairing neuromuscular and neuronal transmission. This Naja nivea (Cape cobra) protein is Long neurotoxin 1.